The sequence spans 275 residues: Undecaprenyl-diphosphatase (275 aa).

Helical transmembrane passes span 2 to 22, 43 to 63, 83 to 103, 111 to 131, 161 to 181, 186 to 206, 225 to 245, and 255 to 275; these read LDIF…FLPI, FINM…IVIY, WQIW…GLPL, MTSW…FIVL, VLSM…AMLI, YVAT…ASLL, ILLV…KFLL, and PFGW…LVFA.

This sequence belongs to the UppP family.

It localises to the cell membrane. It catalyses the reaction di-trans,octa-cis-undecaprenyl diphosphate + H2O = di-trans,octa-cis-undecaprenyl phosphate + phosphate + H(+). In terms of biological role, catalyzes the dephosphorylation of undecaprenyl diphosphate (UPP). Confers resistance to bacitracin. This Lactobacillus delbrueckii subsp. bulgaricus (strain ATCC 11842 / DSM 20081 / BCRC 10696 / JCM 1002 / NBRC 13953 / NCIMB 11778 / NCTC 12712 / WDCM 00102 / Lb 14) protein is Undecaprenyl-diphosphatase.